The chain runs to 313 residues: Protochlorophyllide reductase (313 aa).

It belongs to the short-chain dehydrogenases/reductases (SDR) family. POR subfamily.

It localises to the plastid. The protein localises to the chloroplast. The enzyme catalyses chlorophyllide a + NADP(+) = protochlorophyllide a + NADPH + H(+). Its pathway is porphyrin-containing compound metabolism; chlorophyll biosynthesis. In terms of biological role, phototransformation of protochlorophyllide (Pchlide) to chlorophyllide (Chlide). In Avena sativa (Oat), this protein is Protochlorophyllide reductase.